The following is a 467-amino-acid chain: Syntaxin-5 (467 aa).

Disordered stretches follow at residues 1–53 (MQTR…QSLV) and 58–77 (GHEA…SIST). At 1-445 (MQTRRRLHQT…KYFQSVSKNR (445 aa)) the chain is on the cytoplasmic side. Over residues 10-22 (TDQQDYSSSSTYT) the composition is skewed to low complexity. The span at 29 to 45 (GGAGAGSVGTGTAGGSV) shows a compositional bias: gly residues. The span at 68–77 (NYQSGDSIST) shows a compositional bias: polar residues. Residues 245 to 269 (IKGDLNALNQQIARLQDISKDQRRH) are a coiled coil. The tract at residues 310 to 335 (QQKTRRDQFSQGPGPLAAHTVSPSTA) is disordered. Residues 375–437 (DNYVQQRAET…EAAHGEILKY (63 aa)) enclose the t-SNARE coiled-coil homology domain. A helical; Anchor for type IV membrane protein transmembrane segment spans residues 446-466 (WLMIKIFGVLIFFFLFFVVFM). Residue S467 is a topological domain, vesicular.

This sequence belongs to the syntaxin family. As to quaternary structure, homodimer.

Its subcellular location is the golgi apparatus. The protein localises to the cis-Golgi network membrane. Mediates endoplasmic reticulum to Golgi transport. This chain is Syntaxin-5, found in Drosophila melanogaster (Fruit fly).